Consider the following 931-residue polypeptide: Neuropilin-2 (931 aa).

The or 22 signal peptide spans 1–20 (MDMFPLTWVFLALYFSRHQV). Topologically, residues 21-864 (RGQPDPPCGG…EKSWLYTLDP (844 aa)) are extracellular. Intrachain disulfides connect C28–C55, C83–C105, and C149–C175. CUB domains follow at residues 28–142 (CGGR…YEIF) and 149–267 (CSKN…YYLV). N-linked (GlcNAc...) asparagine glycans are attached at residues N152 and N157. Positions 197, 211, and 252 each coordinate Ca(2+). The cysteines at positions 208 and 230 are disulfide-linked. Disulfide bonds link C277/C427 and C434/C592. F5/8 type C domains lie at 277–427 (CNVP…LFGC) and 434–592 (CSNM…VLGC). Over residues 298–310 (TYSDGRWTPQQSR) the composition is skewed to polar residues. Positions 298-317 (TYSDGRWTPQQSRLHGDDNG) are disordered. Positions 601–622 (VETLGPTVKSEETTTPYPTEEE) are disordered. N629 carries N-linked (GlcNAc...) asparagine glycosylation. One can recognise an MAM domain in the interval 642–802 (SGFNCNFDFL…TDVPLENCME (161 aa)). N-linked (GlcNAc...) asparagine glycosylation occurs at N839. A helical transmembrane segment spans residues 865 to 889 (ILITIIAMSSLGVLLGATCAGLLLY). Residues 890-931 (CTCSYSGLSSRSCTTLENYNFELYDGLKHKVKMNHQKCCSEA) lie on the Cytoplasmic side of the membrane.

The protein belongs to the neuropilin family. In terms of assembly, heterodimer with NRP1. Binds PLXNB1. As to quaternary structure, (Microbial infection) Interacts with human cytomegalovirus proteins gL, UL128, UL130 and UL131A.

It is found in the membrane. It localises to the secreted. High affinity receptor for semaphorins 3C, 3F, VEGF-165 and VEGF-145 isoforms of VEGF, and the PLGF-2 isoform of PGF. Its function is as follows. (Microbial infection) Acts as a receptor for human cytomegalovirus pentamer-dependent entry in epithelial and endothelial cells. This is Neuropilin-2 (NRP2) from Homo sapiens (Human).